The primary structure comprises 469 residues: Siroheme synthase (469 aa).

Positions 1-211 (MSTQLQTWDF…GRTDKARAML (211 aa)) are precorrin-2 dehydrogenase /sirohydrochlorin ferrochelatase. NAD(+)-binding positions include 29–30 (EQ) and 50–51 (DP). S136 is modified (phosphoserine). Residues 227-469 (GEVYLVGAGP…TLRDRLRWMD (243 aa)) are uroporphyrinogen-III C-methyltransferase. An S-adenosyl-L-methionine-binding site is contributed by P236. D259 serves as the catalytic Proton acceptor. The active-site Proton donor is the K281. S-adenosyl-L-methionine is bound by residues 312–314 (GGD), I317, 342–343 (TA), M394, and G423.

In the N-terminal section; belongs to the precorrin-2 dehydrogenase / sirohydrochlorin ferrochelatase family. This sequence in the C-terminal section; belongs to the precorrin methyltransferase family.

The enzyme catalyses uroporphyrinogen III + 2 S-adenosyl-L-methionine = precorrin-2 + 2 S-adenosyl-L-homocysteine + H(+). The catalysed reaction is precorrin-2 + NAD(+) = sirohydrochlorin + NADH + 2 H(+). It carries out the reaction siroheme + 2 H(+) = sirohydrochlorin + Fe(2+). Its pathway is cofactor biosynthesis; adenosylcobalamin biosynthesis; precorrin-2 from uroporphyrinogen III: step 1/1. It functions in the pathway cofactor biosynthesis; adenosylcobalamin biosynthesis; sirohydrochlorin from precorrin-2: step 1/1. The protein operates within porphyrin-containing compound metabolism; siroheme biosynthesis; precorrin-2 from uroporphyrinogen III: step 1/1. It participates in porphyrin-containing compound metabolism; siroheme biosynthesis; siroheme from sirohydrochlorin: step 1/1. Its pathway is porphyrin-containing compound metabolism; siroheme biosynthesis; sirohydrochlorin from precorrin-2: step 1/1. Functionally, multifunctional enzyme that catalyzes the SAM-dependent methylations of uroporphyrinogen III at position C-2 and C-7 to form precorrin-2 via precorrin-1. Then it catalyzes the NAD-dependent ring dehydrogenation of precorrin-2 to yield sirohydrochlorin. Finally, it catalyzes the ferrochelation of sirohydrochlorin to yield siroheme. This is Siroheme synthase from Hahella chejuensis (strain KCTC 2396).